Here is an 88-residue protein sequence, read N- to C-terminus: Apolipoprotein C-I (88 aa).

An N-terminal signal peptide occupies residues 1 to 26 (MRLFLSLPVLVVVLAMVLEGPAPAQA).

It belongs to the apolipoprotein C1 family.

It localises to the secreted. Functionally, inhibitor of lipoprotein binding to the low density lipoprotein (LDL) receptor, LDL receptor-related protein, and very low density lipoprotein (VLDL) receptor. Associates with high density lipoproteins (HDL) and the triacylglycerol-rich lipoproteins in the plasma and makes up about 10% of the protein of the VLDL and 2% of that of HDL. Appears to interfere directly with fatty acid uptake and is also the major plasma inhibitor of cholesteryl ester transfer protein (CETP). Binds free fatty acids and reduces their intracellular esterification. Modulates the interaction of APOE with beta-migrating VLDL and inhibits binding of beta-VLDL to the LDL receptor-related protein. The chain is Apolipoprotein C-I (APOC1) from Ailurus fulgens (Himalayan red panda).